The chain runs to 248 residues: Probable phosphatase VCM66_A0854 (248 aa).

Residues H8, H10, H16, H41, E74, H102, H132, D194, and H196 each coordinate Zn(2+).

Belongs to the PHP family. The cofactor is Zn(2+).

The chain is Probable phosphatase VCM66_A0854 from Vibrio cholerae serotype O1 (strain M66-2).